The primary structure comprises 435 residues: 5-methylthioadenosine/S-adenosylhomocysteine deaminase (435 aa).

Positions 65 and 67 each coordinate Zn(2+). Residues E94, R150, and H189 each coordinate substrate. H216 contacts Zn(2+). Substrate-binding residues include E219 and D304. Residue D304 participates in Zn(2+) binding.

This sequence belongs to the metallo-dependent hydrolases superfamily. MTA/SAH deaminase family. It depends on Zn(2+) as a cofactor.

The enzyme catalyses S-adenosyl-L-homocysteine + H2O + H(+) = S-inosyl-L-homocysteine + NH4(+). The catalysed reaction is S-methyl-5'-thioadenosine + H2O + H(+) = S-methyl-5'-thioinosine + NH4(+). In terms of biological role, catalyzes the deamination of 5-methylthioadenosine and S-adenosyl-L-homocysteine into 5-methylthioinosine and S-inosyl-L-homocysteine, respectively. Is also able to deaminate adenosine. This chain is 5-methylthioadenosine/S-adenosylhomocysteine deaminase, found in Bacillus cereus (strain G9842).